Consider the following 521-residue polypeptide: Cytochrome P450 1A1 (521 aa).

Phe-229 contributes to the substrate binding site. Cys-463 provides a ligand contact to heme.

The protein belongs to the cytochrome P450 family. The cofactor is heme.

It is found in the endoplasmic reticulum membrane. The protein resides in the microsome membrane. The catalysed reaction is an organic molecule + reduced [NADPH--hemoprotein reductase] + O2 = an alcohol + oxidized [NADPH--hemoprotein reductase] + H2O + H(+). Its function is as follows. Cytochromes P450 are a group of heme-thiolate monooxygenases. They oxidize a variety of structurally unrelated compounds, including steroids, fatty acids, and xenobiotics. The polypeptide is Cytochrome P450 1A1 (cyp1a1) (Sparus aurata (Gilthead sea bream)).